The chain runs to 206 residues: MELNVKTLEGKDAGKVSLSDEIFGLDPRQDILARMVRWQLAKKQQGTHKTKNRSEVSRTGAKMYKQKGTGRARHHSARAPQFRGGGKAHGPVVRSHAHDLPKKVRALALRHALSAKLKAEELIIVDQLVASEAKTKALLGSFASLGLTNALVIGGAELDGNFKLAAQNIPNVDVLPVQGINVYDILRRGKLVLSKAAVEALEERFK.

The segment at 42–93 (KKQQGTHKTKNRSEVSRTGAKMYKQKGTGRARHHSARAPQFRGGGKAHGPVV) is disordered. Residues 64 to 77 (YKQKGTGRARHHSA) show a composition bias toward basic residues.

It belongs to the universal ribosomal protein uL4 family. In terms of assembly, part of the 50S ribosomal subunit.

In terms of biological role, one of the primary rRNA binding proteins, this protein initially binds near the 5'-end of the 23S rRNA. It is important during the early stages of 50S assembly. It makes multiple contacts with different domains of the 23S rRNA in the assembled 50S subunit and ribosome. Functionally, forms part of the polypeptide exit tunnel. This chain is Large ribosomal subunit protein uL4, found in Agrobacterium fabrum (strain C58 / ATCC 33970) (Agrobacterium tumefaciens (strain C58)).